We begin with the raw amino-acid sequence, 372 residues long: CXADR-like membrane protein (372 aa).

A signal peptide spans 1–17; sequence MSLFFLWLVTYYVGTLG. 2 Ig-like C2-type domains span residues 18 to 126 and 134 to 223; these read THTE…VILK and PKCE…VRVT. Residues 18–234 are Extracellular-facing; that stretch reads THTEIKRVAE…QYVQSIGMVA (217 aa). 2 cysteine pairs are disulfide-bonded: Cys34-Cys110 and Cys152-Cys207. N-linked (GlcNAc...) asparagine glycosylation is found at Asn73 and Asn196. A helical transmembrane segment spans residues 235-255; the sequence is GAVTGIVAGALLIFLLIWLLI. Residues 256–372 are Cytoplasmic-facing; it reads RRKSKERYEE…PSQSRAFQTV (117 aa). Over residues 263 to 280 the composition is skewed to basic and acidic residues; the sequence is YEEEDRPNEIREDAEAPR. The interval 263 to 372 is disordered; sequence YEEEDRPNEI…PSQSRAFQTV (110 aa). Composition is skewed to low complexity over residues 287–313 and 352–361; these read SSSS…ASRS and LTKAETTLST. The span at 362 to 372 shows a compositional bias: polar residues; sequence MPSQSRAFQTV.

In terms of tissue distribution, predominantly expressed in the white adipose tissue.

The protein localises to the cell junction. The protein resides in the tight junction. It is found in the cell membrane. Functionally, may be involved in the cell-cell adhesion. May play a role in adipocyte differentiation and development of obesity. Is required for normal small intestine development. The protein is CXADR-like membrane protein (Clmp) of Rattus norvegicus (Rat).